A 641-amino-acid polypeptide reads, in one-letter code: Epstein-Barr nuclear antigen 1 (641 aa).

The span at 1–14 (MSDEGPGTGPGNGL) shows a compositional bias: gly residues. Disordered stretches follow at residues 1–124 (MSDE…AGGA) and 168–478 (GAGA…NPKF). The segment covering 41–50 (RGRGRGRGRG) has biased composition (basic residues). Composition is skewed to gly residues over residues 51–62 (GGRPGAPGGSGS), 84–124 (GAHG…AGGA), and 168–352 (GAGA…GSGG). The interval 325-376 (GGGGRGRGGSGGRGRGGSGGRGRGGSGGRRGRGRERARGRSRERARGRGRGR) is interaction with host C1QBP/P32. The tract at residues 328–378 (GRGRGGSGGRGRGGSGGRGRGGSGGRRGRGRERARGRSRERARGRGRGRGE) is chromosome-tethering GR2. Positions 358–381 (RERARGRSRERARGRGRGRGEKRP) are enriched in basic and acidic residues. The interval 379–386 (KRPRSPSS) is nuclear localization signal. Residues 383–394 (SPSSQSSSSGSP) show a composition bias toward low complexity. Residues serine 385 and serine 393 each carry the phosphoserine modification. The tract at residues 387–395 (QSSSSGSPP) is interaction with host CSNK2B. The segment at 436–450 (QGPTDDPGEGPSTGP) is interaction with host USP7. Residues 452–607 (GQGDGGRRKK…CSFDDGVDLP (156 aa)) are DBD/DD. Basic residues predominate over residues 458 to 470 (RRKKGGWFGKHRG). Residues lysine 460, lysine 461, and tyrosine 518 each contribute to the DNA site. Tyrosine 518 acts as the For site-specific DNA cleavage activity in catalysis. Residues 612–641 (PMVEGAAAEGDDGDDGDEGGDGDEGEEGQE) form a disordered region. A compositionally biased stretch (acidic residues) spans 620–641 (EGDDGDDGDEGGDGDEGEEGQE).

This sequence belongs to the herpesviridae EBNA1 family. Homodimer. Dimers can assemble into higher-order oligomers like a homohexamer. Binding to the DS element involves 2 dimers of EBNA1. Interacts with human USP7; this interaction is independent and simultaneous to EBNA1 interaction with CSNK2B as well as necessary for PML nuclear bodies disruption by EBNA1. Interacts with host CSNK2B (via KSSR motif); the interaction requires phosphorylation of EBNA1, is independent and simultaneous to EBNA1 interaction with USP7 as well as necessary for PML nuclear bodies disruption by EBNA1. EBNA1, USP7 and CSNK2B form a ternary complex. EBNA1, USP7 and CSNK2B form a ternary complex. Interacts with human EBP2; it is not clear if this interaction is linked with the ability of EBNA1 to associate with host mitotic chromosomes. Interacts with BGLF4; this interaction facilitates the switch from latent to lytic DNA replication by down-regulating EBNA1 replication function. Interacts with human PAX5; this interaction promotes EBNA1-dependent transcription. Interacts with host KPNA1/Importin subunit alpha-5; this interaction allows the nuclear import of EBNA1. Interacts with host KPNA2/Importin subunit alpha-1; this interaction allows the nuclear import of EBNA1. Interacts with host C1QBP/P32. Interacts with host BIRC5/Survivin; this interaction is probably important for EBV episome maintenance in Burkitt's lymphoma host cells. In terms of processing, phosphorylation at Ser-385 increases the nuclear import efficiency of EBNA1. Post-translationally, phosphorylation at Ser-393 is required for interaction with CSNK2B.

The protein resides in the host nucleus. Functionally, responsible for the origin of replication (oriP) dependent replication and maintenance of viral episomes during latent infection. EBNA1 dimer interacts with the DS (dyad symmetry) element within the origin of replication oriP and with a host mitotic chromosome to initiate viral DNA replication during latency. EBNA1 binding to DS recruits the host origin recognition complex (ORC). Governs the faithful mitotic segregation of the viral episomes by binding both the FR (family of repeats) element within oriP and the host mitotic chromosomes. Forms a cell cycle-dependent tyrosine-dependent DNA cross-link and single-strand cleavage at oriP required for terminating replication and maintaining viral episomes. Counteracts the stabilization of host p53/TP53 by host USP7, thereby decreasing apoptosis and increasing host cell survival. Induces degradation of host PML through the ubiquitin-proteasome system, which promotes lytic reactivation and may impair the host cell DNA repair. Increases the association of CK2 with PML proteins which increases the phosphorylation of PML proteins by CK2, triggering the polyubiquitylation and degradation of PML. Displays inhibitory effects on a SUMO2-modified complex that includes STUB1, KAP1 and USP7. This inhibitory effect possibly participates to the maintenance of latency linked to PML silencing. This Epstein-Barr virus (strain GD1) (HHV-4) protein is Epstein-Barr nuclear antigen 1 (EBNA1).